A 190-amino-acid chain; its full sequence is MLEQLYDSLVNAPVVKRGDYSYFIHPVSDGVPLLEPSLLEEISECILCYADMDVDRIVTVEAMGIPVATCLSLKTGIPLSIVRKRKYDLAGEIELSQSTGYSKGKLYVNGISEGDRVLIVDDVISTGGTLLVLVKALEDAGIKISDVVAVIERGTGSNDLRDAGIDVKTLVRVEVDDDRVVVEEVYSDNE.

This sequence belongs to the purine/pyrimidine phosphoribosyltransferase family. Archaeal HPRT subfamily. As to quaternary structure, homodimer.

It localises to the cytoplasm. It catalyses the reaction IMP + diphosphate = hypoxanthine + 5-phospho-alpha-D-ribose 1-diphosphate. The enzyme catalyses GMP + diphosphate = guanine + 5-phospho-alpha-D-ribose 1-diphosphate. It participates in purine metabolism; IMP biosynthesis via salvage pathway; IMP from hypoxanthine: step 1/1. Catalyzes a salvage reaction resulting in the formation of IMP that is energically less costly than de novo synthesis. The chain is Hypoxanthine/guanine phosphoribosyltransferase from Methanosalsum zhilinae (strain DSM 4017 / NBRC 107636 / OCM 62 / WeN5) (Methanohalophilus zhilinae).